The chain runs to 255 residues: FMR1 neighbor protein (255 aa).

Residues 1–68 (MSSHRRKAKG…ESLKMRVSKP (68 aa)) lie on the Cytoplasmic side of the membrane. The helical transmembrane segment at 69–89 (FGMLMLSIWILLFVCYYLSYY) threads the bilayer. The Extracellular segment spans residues 90 to 183 (LCSGSSYFVL…FAPFRDVPKQ (94 aa)). In terms of domain architecture, P-type spans 125–184 (LLNFFFPTTCNLRENQVAKPCNELQDLSESECLRHKCCFSSSGTTSFKCFAPFRDVPKQM). The helical transmembrane segment at 184–204 (MMQMFGLGAISLILVCLPIYC) threads the bilayer. Residues 205–255 (RSLFWRSEPADDLQRQDNRVVTGLKKQRRKRKRKSEMLQKAARGREEHGDE) lie on the Cytoplasmic side of the membrane. The tract at residues 220 to 255 (QDNRVVTGLKKQRRKRKRKSEMLQKAARGREEHGDE) is disordered. The segment covering 229-238 (KKQRRKRKRK) has biased composition (basic residues).

In terms of tissue distribution, testis-specific. Expressed in melanoma, sarcoma, lung, breast, bladder, esophageal and ovarian cancers.

The protein resides in the membrane. In Homo sapiens (Human), this protein is FMR1 neighbor protein.